Consider the following 279-residue polypeptide: Fatty-acid-binding protein 1 (279 aa).

Residues arginine 103, tyrosine 116, and serine 183 each contribute to the dodecanoate site.

Belongs to the chalcone isomerase family. In terms of tissue distribution, expressed in developing cotyledons, young seedlings, roots, seeds, embryos, macrospores, preanthesis and tapetum. Restricted to developing and reproductive tissues.

It localises to the plastid. It is found in the chloroplast stroma. Its function is as follows. Fatty-acid-binding protein. Interacts preferentially with saturated fatty acid. May be involved in alpha-linolenic (C18:3) metabolism. This chain is Fatty-acid-binding protein 1 (FAP1), found in Arabidopsis thaliana (Mouse-ear cress).